We begin with the raw amino-acid sequence, 425 residues long: Glutamate-1-semialdehyde 2,1-aminomutase (425 aa).

Lys265 bears the N6-(pyridoxal phosphate)lysine mark.

It belongs to the class-III pyridoxal-phosphate-dependent aminotransferase family. HemL subfamily. As to quaternary structure, homodimer. It depends on pyridoxal 5'-phosphate as a cofactor.

It is found in the cytoplasm. It catalyses the reaction (S)-4-amino-5-oxopentanoate = 5-aminolevulinate. It functions in the pathway porphyrin-containing compound metabolism; protoporphyrin-IX biosynthesis; 5-aminolevulinate from L-glutamyl-tRNA(Glu): step 2/2. The sequence is that of Glutamate-1-semialdehyde 2,1-aminomutase from Chromobacterium violaceum (strain ATCC 12472 / DSM 30191 / JCM 1249 / CCUG 213 / NBRC 12614 / NCIMB 9131 / NCTC 9757 / MK).